The following is a 366-amino-acid chain: Chorismate synthase (366 aa).

Arg-48 and Arg-54 together coordinate NADP(+). Residues 125 to 127 (RSS), 238 to 239 (NA), Gly-278, 293 to 297 (KPTSS), and Arg-319 contribute to the FMN site.

It belongs to the chorismate synthase family. In terms of assembly, homotetramer. It depends on FMNH2 as a cofactor.

The catalysed reaction is 5-O-(1-carboxyvinyl)-3-phosphoshikimate = chorismate + phosphate. It functions in the pathway metabolic intermediate biosynthesis; chorismate biosynthesis; chorismate from D-erythrose 4-phosphate and phosphoenolpyruvate: step 7/7. In terms of biological role, catalyzes the anti-1,4-elimination of the C-3 phosphate and the C-6 proR hydrogen from 5-enolpyruvylshikimate-3-phosphate (EPSP) to yield chorismate, which is the branch point compound that serves as the starting substrate for the three terminal pathways of aromatic amino acid biosynthesis. This reaction introduces a second double bond into the aromatic ring system. This is Chorismate synthase from Cellvibrio japonicus (strain Ueda107) (Pseudomonas fluorescens subsp. cellulosa).